Here is a 259-residue protein sequence, read N- to C-terminus: Ubiquinone/menaquinone biosynthesis C-methyltransferase UbiE (259 aa).

S-adenosyl-L-methionine-binding positions include Thr-82, Asp-103, and 131–132; that span reads NA.

This sequence belongs to the class I-like SAM-binding methyltransferase superfamily. MenG/UbiE family.

The enzyme catalyses a 2-demethylmenaquinol + S-adenosyl-L-methionine = a menaquinol + S-adenosyl-L-homocysteine + H(+). It carries out the reaction a 2-methoxy-6-(all-trans-polyprenyl)benzene-1,4-diol + S-adenosyl-L-methionine = a 5-methoxy-2-methyl-3-(all-trans-polyprenyl)benzene-1,4-diol + S-adenosyl-L-homocysteine + H(+). It participates in quinol/quinone metabolism; menaquinone biosynthesis; menaquinol from 1,4-dihydroxy-2-naphthoate: step 2/2. The protein operates within cofactor biosynthesis; ubiquinone biosynthesis. Functionally, methyltransferase required for the conversion of demethylmenaquinol (DMKH2) to menaquinol (MKH2) and the conversion of 2-polyprenyl-6-methoxy-1,4-benzoquinol (DDMQH2) to 2-polyprenyl-3-methyl-6-methoxy-1,4-benzoquinol (DMQH2). This Agrobacterium fabrum (strain C58 / ATCC 33970) (Agrobacterium tumefaciens (strain C58)) protein is Ubiquinone/menaquinone biosynthesis C-methyltransferase UbiE.